Here is a 383-residue protein sequence, read N- to C-terminus: tRNA (adenine(58)-N(1))-methyltransferase catalytic subunit TRM61 (383 aa).

S-adenosyl-L-methionine contacts are provided by residues Val94, 121–124 (SGSF), Glu139, Arg144, 168–169 (DV), and Asp203. Phosphoserine is present on Ser302.

It belongs to the class I-like SAM-binding methyltransferase superfamily. TRM61 family. In terms of assembly, heterotetramer; composed of two copies of TRM6/GCD10 and two copies of TRM61/GCD14.

The protein localises to the nucleus. The catalysed reaction is adenosine(58) in tRNA + S-adenosyl-L-methionine = N(1)-methyladenosine(58) in tRNA + S-adenosyl-L-homocysteine + H(+). Functionally, catalytic subunit of tRNA (adenine-N(1)-)-methyltransferase, which catalyzes the formation of N(1)-methyladenine at position 58 (m1A58) in initiator methionyl-tRNA. GCD14 is also required for repression of GCN4 mRNA translation by the upstream open reading frames (uORFs) under conditions of amino acid sufficiency. The sequence is that of tRNA (adenine(58)-N(1))-methyltransferase catalytic subunit TRM61 (GCD14) from Saccharomyces cerevisiae (strain ATCC 204508 / S288c) (Baker's yeast).